The chain runs to 407 residues: Peptidase T (407 aa).

Residue histidine 82 participates in Zn(2+) binding. Aspartate 84 is a catalytic residue. Aspartate 143 is a binding site for Zn(2+). Catalysis depends on glutamate 177, which acts as the Proton acceptor. The Zn(2+) site is built by glutamate 178, aspartate 200, and histidine 382.

Belongs to the peptidase M20B family. Zn(2+) is required as a cofactor.

The protein localises to the cytoplasm. It carries out the reaction Release of the N-terminal residue from a tripeptide.. Cleaves the N-terminal amino acid of tripeptides. The protein is Peptidase T of Streptococcus pyogenes serotype M2 (strain MGAS10270).